We begin with the raw amino-acid sequence, 158 residues long: Snaclec coagulation factor X-activating enzyme light chain 2 (158 aa).

The N-terminal stretch at 1–24 is a signal peptide; it reads MGRFISVSFGLLVVFLSLSGTGAG. Intrachain disulfides connect Cys27–Cys38, Cys55–Cys152, and Cys127–Cys144. Positions 34–153 constitute a C-type lectin domain; sequence YRYFCYRVFK…CEERYLFVCK (120 aa). Asn82 carries an N-linked (GlcNAc...) (complex) asparagine glycan.

It belongs to the snaclec family. As to quaternary structure, heterotrimer; disulfide-linked. The heterotrimer consists of 1 heavy chain (a metalloproteinase) and 2 light chains: LC1 and LC2. In terms of processing, N-glycosylated; probably required for conformation. Removal of easily accessible sugars does not change its functional capacity, but removal of the core sugars with N-glycanase causes a virtually complete loss of enzyme activity, apparently as a result of major conformational changes in the molecule. Not O-glycosylated. In terms of tissue distribution, expressed by the venom gland.

Its subcellular location is the secreted. Regulatory subunit of the blood coagulation factor X- and IX-activating enzyme. The enzyme activates coagulation factor X (F10) by cleaving the Arg-Ile bond and is also able to activate coagulation factor IX (F9) and protein S (PROS1) by specific cleavage of Arg-Ile and Arg-Val bonds. May serve as an exosite by which the enzyme recognizes and binds to the Gla domain of factor X (F10) and factor IX (F9) in a calcium-dependent manner. In Daboia siamensis (Eastern Russel's viper), this protein is Snaclec coagulation factor X-activating enzyme light chain 2 (LC2).